The primary structure comprises 205 residues: FAS-associated death domain protein (205 aa).

Positions 3 to 81 constitute a DED domain; it reads PFLVLLHSLS…RHDLLQRLDD (79 aa). A Death domain is found at 97-181; it reads LQVAFDIVCD…LVADLVEEAQ (85 aa). The tract at residues 181–205 is disordered; sequence QESVSKSENMSPVLRDSTVSSSETP. S191 bears the Phosphoserine mark.

Can self-associate. Component of the AIM2 PANoptosome complex, a multiprotein complex that drives inflammatory cell death (PANoptosis). Component of the death-induced signaling complex (DISC) composed of cell surface receptor FAS/CD95 or TNFRSF1A, adapter protein FADD and the CASP8 protease; recruitment of CASP8 to the complex is required for processing of CASP8 into the p18 and p10 subunits. Interacts (via death domain) with FAS (via death domain). Interacts directly (via DED domain) with NOL3 (via CARD domain); inhibits death-inducing signaling complex (DISC) assembly by inhibiting the increase in FAS-FADD binding induced by FAS activation. Interacts with CFLAR, PEA15 and MBD4. When phosphorylated, part of a complex containing HIPK3 and FAS. May interact with MAVS/IPS1. Interacts with MOCV v-CFLAR protein and PIDD1. Interacts with RIPK1 and TRADD. Interacts with stimulated TNFRSF10B. Interacts with DDX24.

The protein localises to the cytoplasm. Functionally, apoptotic adapter molecule that recruits caspases CASP8 or CASP10 to the activated FAS/CD95 or TNFRSF1A/TNFR-1 receptors. The resulting aggregate called the death-inducing signaling complex (DISC) performs CASP8 proteolytic activation. Active CASP8 initiates the subsequent cascade of caspases mediating apoptosis. Involved in interferon-mediated antiviral immune response, playing a role in the positive regulation of interferon signaling. The sequence is that of FAS-associated death domain protein from Mus musculus (Mouse).